The primary structure comprises 234 residues: MRLLNNLILMVVLFVAVSNATTKFTFNTFSVRNTEDQTCFTKTAKTTDDSTKVDINKCTVGCGGSMKIRKGTKSQQYQFELFSSTDCTGETTSKVLFVCPNPSIDAISIKSTSNTIKCGTLPPDSEIKEDDTATAVVNDENNNETKNEPKTKTKSTPKSPSTPKTNNSNEDSDLTTSSSDSSSSTKSSPKSKSSTEVNENKPKSDNETAEGNNASSNIATFSLVIISLLVASLF.

The N-terminal stretch at 1–20 (MRLLNNLILMVVLFVAVSNA) is a signal peptide. Residues N19, N143, N166, and N206 are each glycosylated (N-linked (GlcNAc...) asparagine). Positions 115–213 (TIKCGTLPPD…SDNETAEGNN (99 aa)) are disordered. Residues 154 to 195 (KSTPKSPSTPKTNNSNEDSDLTTSSSDSSSSTKSSPKSKSST) are compositionally biased toward low complexity. N212 is lipidated: GPI-like-anchor amidated asparagine. Residue N213 is glycosylated (N-linked (GlcNAc...) asparagine). A propeptide spans 213–234 (NASSNIATFSLVIISLLVASLF) (removed in mature form).

This sequence belongs to the ponticulin family. The GPI-like-anchor contains a phosphoceramide group, rather than a phosphatidyl group.

It localises to the cell membrane. Binds F-actin and nucleates actin assembly. The chain is Ponticulin-like protein J (ponJ) from Dictyostelium discoideum (Social amoeba).